Consider the following 249-residue polypeptide: Large ribosomal subunit protein uL10m (249 aa).

The N-terminal 31 residues, 1–31 (MLQLRFMPGWVPRNGFFGLKETIGTVHKRFY), are a transit peptide targeting the mitochondrion. The segment at 226–249 (SHNDNQKPKEDVESTTDAESKGSK) is disordered.

Belongs to the universal ribosomal protein uL10 family. As to quaternary structure, component of the mitochondrial large ribosomal subunit (mt-LSU). Mature yeast 74S mitochondrial ribosomes consist of a small (37S) and a large (54S) subunit. The 37S small subunit contains a 15S ribosomal RNA (15S mt-rRNA) and 34 different proteins. The 54S large subunit contains a 21S rRNA (21S mt-rRNA) and 46 different proteins.

The protein localises to the mitochondrion. In terms of biological role, component of the mitochondrial ribosome (mitoribosome), a dedicated translation machinery responsible for the synthesis of mitochondrial genome-encoded proteins, including at least some of the essential transmembrane subunits of the mitochondrial respiratory chain. The mitoribosomes are attached to the mitochondrial inner membrane and translation products are cotranslationally integrated into the membrane. The protein is Large ribosomal subunit protein uL10m (MRPL11) of Saccharomyces cerevisiae (strain ATCC 204508 / S288c) (Baker's yeast).